The chain runs to 39 residues: Cecropin (39 aa).

It is found in the secreted. Its function is as follows. Antibacterial peptide active against Gram-negative bacterium E.coli. Has no activity against Gram-positive bacterium M.luteus. Weakly active against M.luteus. The chain is Cecropin from Calliphora vicina (Blue blowfly).